Reading from the N-terminus, the 635-residue chain is 1-deoxy-D-xylulose-5-phosphate synthase (635 aa).

Thiamine diphosphate is bound by residues histidine 72 and 113–115 (GHA). Aspartate 144 provides a ligand contact to Mg(2+). Thiamine diphosphate is bound by residues 145 to 146 (GA), asparagine 174, tyrosine 287, and glutamate 370. Asparagine 174 contacts Mg(2+).

It belongs to the transketolase family. DXPS subfamily. As to quaternary structure, homodimer. Mg(2+) serves as cofactor. It depends on thiamine diphosphate as a cofactor.

It carries out the reaction D-glyceraldehyde 3-phosphate + pyruvate + H(+) = 1-deoxy-D-xylulose 5-phosphate + CO2. The protein operates within metabolic intermediate biosynthesis; 1-deoxy-D-xylulose 5-phosphate biosynthesis; 1-deoxy-D-xylulose 5-phosphate from D-glyceraldehyde 3-phosphate and pyruvate: step 1/1. Catalyzes the acyloin condensation reaction between C atoms 2 and 3 of pyruvate and glyceraldehyde 3-phosphate to yield 1-deoxy-D-xylulose-5-phosphate (DXP). The polypeptide is 1-deoxy-D-xylulose-5-phosphate synthase (Trichodesmium erythraeum (strain IMS101)).